Reading from the N-terminus, the 221-residue chain is Proline-rich protein 20A (221 aa).

Disordered regions lie at residues 1–103 (MEEP…QRQG) and 137–174 (SLSETGPPPGTVQEGPGPDVAQPELGFQEPPAAPGPQA). Over residues 42-53 (PAQPAQPAKPIA) the composition is skewed to low complexity. Pro residues predominate over residues 63 to 72 (PARPESPPPA). Over residues 75-93 (GRRRGGSRRPGRGRGRRAG) the composition is skewed to basic residues.

It belongs to the PRR20 family.

This is Proline-rich protein 20A (PRR20A) from Homo sapiens (Human).